Reading from the N-terminus, the 311-residue chain is Heme A synthase (311 aa).

Topologically, residues 1-6 are cytoplasmic; the sequence is MQRFIK. The helical transmembrane segment at 7 to 27 threads the bilayer; sequence WLAVITSLDLLIVLLGGALVT. At 28–62 the chain is on the extracellular side; sequence KTGSGQGCGKSWPLCNGEFVPSNLSMETIIELSHR. C35 and C42 are joined by a disulfide. E58 is an active-site residue. H61 is a binding site for heme o. Residues 63 to 83 traverse the membrane as a helical segment; it reads LTSGSAGILVTLLCILSWKYY. At 84–91 the chain is on the cytoplasmic side; that stretch reads KHVRETKT. A helical membrane pass occupies residues 92–112; the sequence is LAILSFVFLVAQALMGAAAVV. The Extracellular segment spans residues 113–121; sequence WGQMPAVLA. A helical membrane pass occupies residues 122–142; sequence IHFGISLISFASVILLTCLIF. Residue H123 coordinates heme o. Topologically, residues 143-159 are cytoplasmic; sequence EIDQKFDARSLIMDKKM. Residues 160–180 form a helical membrane-spanning segment; that stretch reads KFHIYGVTIYSYIVVYTGALV. The Extracellular portion of the chain corresponds to 181–211; sequence RHERASLACPDFPLCSKNRPMPTQLHEWVQM. Cysteines 189 and 195 form a disulfide. A helical transmembrane segment spans residues 212–232; sequence GHRVAAMLIFAWILYAMILAI. H213 provides a ligand contact to heme b. At 233–243 the chain is on the cytoplasmic side; the sequence is RHYKQQPVVYW. The helical transmembrane segment at 244 to 264 threads the bilayer; sequence GWIISFILVTLQAVVGVLVVF. The Extracellular segment spans residues 265 to 271; that stretch reads TNASLAM. A helical membrane pass occupies residues 272-292; sequence ALLHSLFISCLFAVLCYLVML. Residue H275 coordinates heme b. The Cytoplasmic segment spans residues 293–311; the sequence is GTRSKVNAKEAELTSKQTK.

Belongs to the COX15/CtaA family. Type 1 subfamily. As to quaternary structure, interacts with CtaB. Heme b is required as a cofactor.

The protein localises to the cell membrane. It catalyses the reaction Fe(II)-heme o + 2 A + H2O = Fe(II)-heme a + 2 AH2. The protein operates within porphyrin-containing compound metabolism; heme A biosynthesis; heme A from heme O: step 1/1. Its function is as follows. Catalyzes the conversion of heme O to heme A by two successive hydroxylations of the methyl group at C8. The first hydroxylation forms heme I, the second hydroxylation results in an unstable dihydroxymethyl group, which spontaneously dehydrates, resulting in the formyl group of heme A. The chain is Heme A synthase from Bacillus cereus (strain ATCC 14579 / DSM 31 / CCUG 7414 / JCM 2152 / NBRC 15305 / NCIMB 9373 / NCTC 2599 / NRRL B-3711).